The following is a 147-amino-acid chain: Hemoglobin subunit beta-2 (147 aa).

In terms of domain architecture, Globin spans 3–147 (HWTAEEKATI…LVAALSHGYF (145 aa)). Heme b is bound by residues H64 and H93.

Belongs to the globin family. Heterotetramer of two alpha chains and two beta chains. In terms of tissue distribution, red blood cells.

Its function is as follows. This is a larval (tadpole) beta-globin. The polypeptide is Hemoglobin subunit beta-2 (hbb2) (Xenopus tropicalis (Western clawed frog)).